The chain runs to 326 residues: tRNA uridine(34) hydroxylase (326 aa).

Residues 122 to 218 enclose the Rhodanese domain; sequence EENRCLVLDV…YGQAVGTGKW (97 aa). Cysteine 178 (cysteine persulfide intermediate) is an active-site residue.

The protein belongs to the TrhO family.

It catalyses the reaction uridine(34) in tRNA + AH2 + O2 = 5-hydroxyuridine(34) in tRNA + A + H2O. Functionally, catalyzes oxygen-dependent 5-hydroxyuridine (ho5U) modification at position 34 in tRNAs. The protein is tRNA uridine(34) hydroxylase of Chlamydia abortus (strain DSM 27085 / S26/3) (Chlamydophila abortus).